Reading from the N-terminus, the 426-residue chain is Tektin-1 (426 aa).

Coiled coils occupy residues 21–84 (KNQY…LEQL), 268–307 (LKET…LDQE), and 339–383 (KEVG…ENTI). The tract at residues 396–426 (SNPLRDGGDQGQWARACAPTPSAEDGTSHTD) is disordered.

It belongs to the tektin family. Microtubule inner protein component of sperm flagellar doublet microtubules. Post-translationally, ubiquitinated, leading to its degradation. Deubiquitinated by USP16, promoting its stability.

The protein localises to the cytoplasm. It localises to the cytoskeleton. It is found in the cilium axoneme. The protein resides in the flagellum axoneme. Functionally, microtubule inner protein (MIP) part of the dynein-decorated doublet microtubules (DMTs) in cilia and flagellar axoneme. Forms filamentous polymers in the walls of ciliary and flagellar microtubules. The sequence is that of Tektin-1 (TEKT1) from Canis lupus familiaris (Dog).